The primary structure comprises 132 residues: Large ribosomal subunit protein uL24 (132 aa).

Belongs to the universal ribosomal protein uL24 family. Part of the 50S ribosomal subunit.

In terms of biological role, one of two assembly initiator proteins, it binds directly to the 5'-end of the 23S rRNA, where it nucleates assembly of the 50S subunit. Functionally, one of the proteins that surrounds the polypeptide exit tunnel on the outside of the subunit. This is Large ribosomal subunit protein uL24 from Synechococcus sp. (strain JA-2-3B'a(2-13)) (Cyanobacteria bacterium Yellowstone B-Prime).